We begin with the raw amino-acid sequence, 135 residues long: Large ribosomal subunit protein uL16 (135 aa).

Belongs to the universal ribosomal protein uL16 family. As to quaternary structure, part of the 50S ribosomal subunit.

Functionally, binds 23S rRNA and is also seen to make contacts with the A and possibly P site tRNAs. The polypeptide is Large ribosomal subunit protein uL16 (Coprothermobacter proteolyticus (strain ATCC 35245 / DSM 5265 / OCM 4 / BT)).